Here is a 997-residue protein sequence, read N- to C-terminus: Translation initiation factor IF-2 (997 aa).

Residues 101–409 (ELAAEQAAAR…QHQDRRHEQV (309 aa)) form a disordered region. Low complexity-rich tracts occupy residues 116–185 (AEAV…QAEP), 195–208 (AAPAQAVAEPVEPA), and 244–280 (PSAPAESPKSAKAEPAAAPKTTAKPGEIRRAAAPAAP). A compositionally biased stretch (basic and acidic residues) spans 281-292 (DRAREEARRAAE). Residues 385–394 (RAGGKGGRGG) are compositionally biased toward gly residues. Residues 400 to 409 (QHQDRRHEQV) show a composition bias toward basic and acidic residues. The tr-type G domain occupies 498-665 (PRAPVVTVMG…NVLLQAEILE (168 aa)). The tract at residues 507 to 514 (GHVDHGKT) is G1. 507 to 514 (GHVDHGKT) serves as a coordination point for GTP. The interval 532 to 536 (GITQH) is G2. The G3 stretch occupies residues 553-556 (DTPG). GTP-binding positions include 553 to 557 (DTPGH) and 607 to 610 (NKID). Residues 607-610 (NKID) are G4. Residues 643 to 645 (SAK) are G5.

Belongs to the TRAFAC class translation factor GTPase superfamily. Classic translation factor GTPase family. IF-2 subfamily.

The protein localises to the cytoplasm. One of the essential components for the initiation of protein synthesis. Protects formylmethionyl-tRNA from spontaneous hydrolysis and promotes its binding to the 30S ribosomal subunits. Also involved in the hydrolysis of GTP during the formation of the 70S ribosomal complex. This Bordetella bronchiseptica (strain ATCC BAA-588 / NCTC 13252 / RB50) (Alcaligenes bronchisepticus) protein is Translation initiation factor IF-2.